Consider the following 1300-residue polypeptide: MTEQQKLTFTALQQRLDSLMLRDRLRFSRRLHGVKKVKNPDAQQAIFQEMAKEIDQAAGKVLLREAARPEITYPDNLPVSQKKQDILEAIRDHQVVIVAGETGSGKTTQLPKICMELGRGIKGLIGHTQPRRLAARTVANRIAEELKTEPGGCIGYKVRFSDHVSDNTMVKLMTDGILLAEIQQDRLLMQYDTIIIDEAHERSLNIDFLLGYLKELLPRRPDLKIIITSATIDPERFSRHFNNAPIIEVSGRTYPVEVRYRPIVEEADDTERDQLQAIFDAVDELSQESHGDILIFMSGEREIRDTADALNKLNLRHTEILPLYARLSNSEQNRVFQSHSGRRIVLATNVAETSLTVPGIKYVIDPGTARISRYSYRTKVQRLPIEPISQASANQRKGRCGRVSEGICIRLYSEDDFLSRPEFTDPEILRTNLASVILQMTALGLGDIAAFPFVEAPDKRNIQDGVRLLEELGAITTDEQASAYKLTPLGRQLSQLPVDPRLARMVLEAQKHGCVREAMIITSALSIQDPRERPMDKQQASDEKHRRFHDKESDFLAFVNLWNYLGEQQKALSSNAFRRLCRTDYLNYLRVREWQDIYTQLRQVVKELGIPVNSEPAEYREIHIALLTGLLSHIGMKDADKQEYTGARNARFSIFPGSGLFKKPPKWVMVAELVETSRLWGRIAARIDPEWVEPVAQHLIKRTYSEPHWERAQGAVMATEKVTVYGLPIVAARKVNYSQIDPALCRELFIRHALVEGDWQTRHAFFRENLKLRAEVEELEHKSRRRDILVDDETLFEFYDQRISHDVISARHFDSWWKKVSRETPDLLNFEKSMLIKEGAEKISKLDYPNFWHQGNLKLRLSYQFEPGADADGVTVHIPLPLLNQVEESGFEWQIPGLRRELVIALIKSLPKPVRRNFVPAPNYAEAFLGRVKPLELPLLDSLERELRRMTGVTVDREDWHWDQVPDHLKITFRVVDDKNKKLKEGRSLQDLKDALKGKVQETLSAVADDGIEQSGLHIWSFGQLPESYEQKRGNYKVKAWPALVDERDSVAIKLFDNPLEQKQAMWNGLRRLLLLNIPSPIKYLHEKLPNKAKLGLYFNPYGKVLELIDDCISCGVDKLIDANGGPVWTEEGFAALHEKVRAELNDTVVDIAKQVEQILTAVFNINKRLKGRVDMTMALGLSDIKAQMGGLVYRGFVTGNGFKRLGDTLRYLQAIEKRLEKLAVDPHRDRAQMLKVENVQQAWQQWINKLPPARREDEDVKEIRWMIEELRVSYFAQQLGTPYPISDKRILQAMEQISG.

Residues 87–250 (LEAIRDHQVV…FNNAPIIEVS (164 aa)) enclose the Helicase ATP-binding domain. 100–107 (GETGSGKT) is an ATP binding site. Residues 197–200 (DEAH) carry the DEAH box motif. The region spanning 274 to 444 (QLQAIFDAVD…SVILQMTALG (171 aa)) is the Helicase C-terminal domain.

The protein belongs to the DEAD box helicase family. DEAH subfamily.

The enzyme catalyses ATP + H2O = ADP + phosphate + H(+). Not yet known. The chain is ATP-dependent RNA helicase HrpA (hrpA) from Escherichia coli (strain K12).